The primary structure comprises 221 residues: Iron-sulfur cluster repair protein YtfE (221 aa).

This sequence belongs to the RIC family. YtfE subfamily. Homodimer.

It localises to the cytoplasm. Its function is as follows. Di-iron-containing protein involved in the repair of iron-sulfur clusters damaged by oxidative and nitrosative stress conditions. This is Iron-sulfur cluster repair protein YtfE from Yersinia pestis bv. Antiqua (strain Antiqua).